The following is a 711-amino-acid chain: Ubiquitin carboxyl-terminal hydrolase BAP1 (711 aa).

A UCH catalytic domain is found at 4 to 234; it reads GWLELESDPG…ARLHVLKVNR (231 aa). Residues 56 to 60 carry the Arg-finger motif motif; the sequence is RRSRR. Cys-91 serves as the catalytic Nucleophile. Residue His-169 is the Proton donor of the active site. The tract at residues 255 to 337 is disordered; it reads THKSQESQLP…VPPNPTPIVQ (83 aa). Residues 269–278 are compositionally biased toward low complexity; that stretch reads PASSKSPLAL. Residue Ser-274 is modified to Phosphoserine. The short motif at 345-348 is the HBM-like motif element; the sequence is NHNY. A phosphoserine mark is found at Ser-351 and Ser-377. 2 disordered regions span residues 354–420 and 446–506; these read QEEE…GQLS and SIKT…SPVT. The span at 377–391 shows a compositional bias: acidic residues; it reads SDDEDDYEDEEEDDA. The span at 462-506 shows a compositional bias: polar residues; it reads THSQPSPTPSNESTDTASEIGSAFNSPLRSPIRSANPTRPSSPVT. Thr-475 carries the phosphothreonine modification. Phosphoserine occurs at positions 503, 519, 567, and 579. Residues 557–605 are disordered; the sequence is LTESGKGSSPSIRPSQGSQGSGSPEEKEVVEAVDSREKPGLVRPSESLN. The segment covering 563–579 has biased composition (low complexity); it reads GSSPSIRPSQGSQGSGS. Positions 578-703 are interaction with BRCA1; sequence GSPEEKEVVE…QRKPDRRKRS (126 aa). A compositionally biased stretch (basic and acidic residues) spans 580–596; the sequence is PEEKEVVEAVDSREKPG. Residues 612–643 are a coiled coil; sequence KELLALLKCVEAEIANYEACLKEEVEKRKKFK. The segment at 624-668 is interaction with YY1; the sequence is EIANYEACLKEEVEKRKKFKIDDQRRTHNYDEFICTFISMLAQEG. In terms of domain architecture, ULD spans 652-680; that stretch reads NYDEFICTFISMLAQEGMLANLVEQNISV. Residues 681–683 are interaction with nucleosomal DNA forming a DNA clamp with ASXL1; the sequence is RRR. The Classical bipartite Nuclear localization signal (NLS) signature appears at 681-704; sequence RRRQGVSIGRLHKQRKPDRRKRSR. The disordered stretch occupies residues 685-711; that stretch reads GVSIGRLHKQRKPDRRKRSRPYKAKRQ. Residues 695–711 form a positively charged C-terminal extension (CTE) region; sequence RKPDRRKRSRPYKAKRQ. The Nuclear localization signal motif lies at 699-704; it reads RRKRSR. A Non-classical PY-nuclear localization signal (PY-NLS) motif is present at residues 699–706; sequence RRKRSRPY.

Belongs to the peptidase C12 family. BAP1 subfamily. In terms of assembly, core component of the polycomb repressive deubiquitinase (PR-DUB) complex, at least composed of BAP1, one of ASXL1, ASXL2 or (probably) ASXL3, and one of MBD5 or MBD6. The PR-DUB core associates with a number of accessory proteins, including FOXK1, FOXK2, KDM1B, HCFC1, YY1 and OGT; KDM1B specifically associates with ASXL2 PR-DUB complexes. The BAP1 deubiquitinase activity is not required for PR-DUB assembly. Homodimerizes (via coiled-coil hinge-region between the UCH and ULD domains) to mediate assembly of 2 copies of the BAP1-ASXL heterodimer into a bisymmetric tetramer; dimerization enhances association with nucleosomes. The PR-DUB complex associates with nucleosomes to mediate deubiquitination of 'lys-120' of histone H2AK118ub1 substrates; the association requires the positively charged C-terminal tail of BAP1. Interacts (via ULD domain) with ASXL1 (via DEUBAD domain); the interaction is direct and forms a ubiquitin binding cleft. The interaction with ASXL1 stabilizes BAP1 but is not required for nucleosome binding. Associates (via C-terminus) with nucleosome and chromatosome complexes through direct interaction with DNA and the histone3/4 dimer; this association displaces the histone-2A C-terminal tail, extending and orienting the H2AK118ub1 substrate towards the BAP1 deubiquitinase active site. Also interacts (via arginine finger) directly with the histone H2A-H2B acidic patch; this interaction is not critical for nucleosome-chromatosome association but may play a role in orienting the H2AK118ub1 substrate towards the PR-DUB complex active site. Interacts with BRCA1 (via the RING finger). Interacts (via HBM-like motif) with HCFC1. Interacts (via a C-terminal region overlapping the ULD domain) with YY1; the interaction is direct and requires the interaction with HCFC1. Interacts (when phosphorylated at Thr-475) with FOXK1. Interacts (when phosphorylated at Thr-475) with FOXK2; leading to recruitment of the PR-DUB complex and repression of FOXK2 target genes. Interacts (via non-classical PY-NLS) with TNPO1/transportin-1 (via HEAT repeats 8-12); the interaction is direct, mediates BAP1 nuclear localization and disrupts BAP1 homodimerization. Interacts (via C-terminus) with KPNA1/importin alpha5 and KPNA2/importin alpha1; these interactions can contribute to BAP1 nuclear localization but are less important than the interaction with TNPO1/transportin-1. The interaction with TNPO1/transportin-1 disrupts homodimerization and blocks ubiquitination by UBE2O. In terms of processing, ubiquitinated: monoubiquitinated at multiple sites within its nuclear localization signal (NLS) BY UBE2O, leading to cytoplasmic retention. Able to mediate autodeubiquitination via intramolecular interactions to counteract cytoplasmic retention. Monoubiquitinated on at least 4 sites near or within its PY-NLS.

It localises to the cytoplasm. The protein resides in the nucleus. Its subcellular location is the chromosome. The enzyme catalyses Thiol-dependent hydrolysis of ester, thioester, amide, peptide and isopeptide bonds formed by the C-terminal Gly of ubiquitin (a 76-residue protein attached to proteins as an intracellular targeting signal).. In terms of biological role, deubiquitinating enzyme that plays a key role in chromatin by mediating deubiquitination of histone H2A and HCFC1. Catalytic component of the polycomb repressive deubiquitinase (PR-DUB) complex, a complex that specifically mediates deubiquitination of histone H2A monoubiquitinated at 'Lys-120' (H2AK119ub1). Does not deubiquitinate monoubiquitinated histone H2B. The PR-DUB complex is an epigenetic regulator of gene expression and acts as a transcriptional coactivator, affecting genes involved in development, cell communication, signaling, cell proliferation and cell viability. Antagonizes PRC1 mediated H2AK119ub1 monoubiquitination. As part of the PR-DUB complex, associates with chromatin enriched in histone marks H3K4me1, H3K4me3, and H3K27Ac, but not in H3K27me3. Acts as a regulator of cell growth by mediating deubiquitination of HCFC1 N-terminal and C-terminal chains, with some specificity toward 'Lys-48'-linked polyubiquitin chains compared to 'Lys-63'-linked polyubiquitin chains. Deubiquitination of HCFC1 does not lead to increase stability of HCFC1. Interferes with the BRCA1 and BARD1 heterodimer activity by inhibiting their ability to mediate ubiquitination and autoubiquitination. It however does not mediate deubiquitination of BRCA1 and BARD1. Able to mediate autodeubiquitination via intramolecular interactions to counteract monoubiquitination at the nuclear localization signal (NLS), thereby protecting it from cytoplasmic sequestration. Negatively regulates epithelial-mesenchymal transition (EMT) of trophoblast stem cells during placental development by regulating genes involved in epithelial cell integrity, cell adhesion and cytoskeletal organization. This chain is Ubiquitin carboxyl-terminal hydrolase BAP1 (BAP1), found in Bos taurus (Bovine).